The following is a 334-amino-acid chain: MSIEQLAETAQAMVAPGKGIIAIDESTSTIAKRFASVGIENIEENRRAYRELLLTTPKLSDYISGAILFDETIRQKTKDGVPFAEYMTAHGIIPGIKVDKGAQPLAGMPGELVTEGLDGLRARLEEYYTLGARFAKWRAVINIGEDIPSGTCIEANSHALARYAALCQEQGLVPMVEPEVIMDGSHDIETCYEVTEATLRSLFGALYEQNVVLEGTILKASMVISGKSCEEQASIEEVAESTVMCLKSTVPAILPGIVFLSGGQTDEQSTAHLNEMHQLGNLPWPLSFSYGRAMQQAALKLWAKDMTGNFAKAQQVIYERAKENGLAALGKWKG.

Belongs to the class I fructose-bisphosphate aldolase family.

It carries out the reaction beta-D-fructose 1,6-bisphosphate = D-glyceraldehyde 3-phosphate + dihydroxyacetone phosphate. The protein operates within carbohydrate degradation; glycolysis; D-glyceraldehyde 3-phosphate and glycerone phosphate from D-glucose: step 4/4. This chain is Probable fructose-bisphosphate aldolase class 1, found in Xanthomonas axonopodis pv. citri (strain 306).